Consider the following 485-residue polypeptide: ATP synthase subunit beta (485 aa).

The interval 1-20 (MSTTKTTKMTVKTGSKGTSG) is disordered. 170–177 (GGAGVGKT) contributes to the ATP binding site.

This sequence belongs to the ATPase alpha/beta chains family. In terms of assembly, F-type ATPases have 2 components, CF(1) - the catalytic core - and CF(0) - the membrane proton channel. CF(1) has five subunits: alpha(3), beta(3), gamma(1), delta(1), epsilon(1). CF(0) has three main subunits: a(1), b(2) and c(9-12). The alpha and beta chains form an alternating ring which encloses part of the gamma chain. CF(1) is attached to CF(0) by a central stalk formed by the gamma and epsilon chains, while a peripheral stalk is formed by the delta and b chains.

It is found in the cell membrane. It carries out the reaction ATP + H2O + 4 H(+)(in) = ADP + phosphate + 5 H(+)(out). In terms of biological role, produces ATP from ADP in the presence of a proton gradient across the membrane. The catalytic sites are hosted primarily by the beta subunits. The chain is ATP synthase subunit beta from Mycobacterium leprae (strain TN).